The sequence spans 568 residues: Protein yellow (568 aa).

The N-terminal stretch at 1-28 is a signal peptide; the sequence is MHAQDKGGILPALSLLLIAVAMVSPSQA. N-linked (GlcNAc...) asparagine glycosylation is found at N151 and N222.

This sequence belongs to the major royal jelly protein family.

It is found in the secreted. Functionally, controls the pigmentation pattern of the adult cuticle and larval mouth parts. The polypeptide is Protein yellow (y) (Drosophila subobscura (Fruit fly)).